We begin with the raw amino-acid sequence, 396 residues long: Bone morphogenetic protein 2 (396 aa).

The signal sequence occupies residues 1–23 (MVAGTRCLLALLLPQVLLGGAAG). The propeptide at 24–282 (LIPELGRRKF…GHPLHRREKR (259 aa)) is cleaved by PCSK5. S87 is subject to Phosphoserine. N135, N163, N164, and N200 each carry an N-linked (GlcNAc...) asparagine glycan. The segment at 272–293 (KGHPLHRREKRQAKHKQRKRLK) is disordered. Residues 274–293 (HPLHRREKRQAKHKQRKRLK) are compositionally biased toward basic residues. 3 cysteine pairs are disulfide-bonded: C296/C361, C325/C393, and C329/C395. N338 carries N-linked (GlcNAc...) asparagine glycosylation.

The protein belongs to the TGF-beta family. Homodimer; disulfide-linked. Interacts with SOSTDC1. Interacts with GREM2, RGMA, RGMB and RGMC. Interacts with ASPN. Interacts with MAFP5. Interacts with FBN1 (via N-terminal domain) and FBN2. Interacts with type I receptor BMPR1A. Interacts with type II receptor BMPR2. Interacts with ERFE. Interacts with BMPR1A/ALK3; the interaction may induce HAMP expression. Interacts with TGFBR3.

It localises to the secreted. Growth factor of the TGF-beta superfamily that plays essential roles in many developmental processes, including cardiogenesis, neurogenesis, and osteogenesis. Induces cartilage and bone formation. Initiates the canonical BMP signaling cascade by associating with type I receptor BMPR1A and type II receptor BMPR2. Once all three components are bound together in a complex at the cell surface, BMPR2 phosphorylates and activates BMPR1A. In turn, BMPR1A propagates signal by phosphorylating SMAD1/5/8 that travel to the nucleus and act as activators and repressors of transcription of target genes. Also acts to promote expression of HAMP, via the interaction with its receptor BMPR1A/ALK3. Can also signal through non-canonical pathways such as ERK/MAP kinase signaling cascade that regulates osteoblast differentiation. Also stimulates the differentiation of myoblasts into osteoblasts via the EIF2AK3-EIF2A-ATF4 pathway by stimulating EIF2A phosphorylation which leads to increased expression of ATF4 which plays a central role in osteoblast differentiation. Acts as a positive regulator of odontoblast differentiation during mesenchymal tooth germ formation, expression is repressed during the bell stage by MSX1-mediated inhibition of CTNNB1 signaling. The protein is Bone morphogenetic protein 2 (BMP2) of Dama dama (Fallow deer).